We begin with the raw amino-acid sequence, 472 residues long: 3-isopropylmalate dehydratase large subunit (472 aa).

Positions 289–312 are disordered; sequence TWGTNPAQGTGVSQVVPSPDDAKD. Polar residues predominate over residues 290–304; sequence WGTNPAQGTGVSQVV. [4Fe-4S] cluster is bound by residues Cys-347, Cys-407, and Cys-410.

This sequence belongs to the aconitase/IPM isomerase family. LeuC type 1 subfamily. Heterodimer of LeuC and LeuD. The cofactor is [4Fe-4S] cluster.

The enzyme catalyses (2R,3S)-3-isopropylmalate = (2S)-2-isopropylmalate. It participates in amino-acid biosynthesis; L-leucine biosynthesis; L-leucine from 3-methyl-2-oxobutanoate: step 2/4. Its function is as follows. Catalyzes the isomerization between 2-isopropylmalate and 3-isopropylmalate, via the formation of 2-isopropylmaleate. The sequence is that of 3-isopropylmalate dehydratase large subunit from Halalkalibacterium halodurans (strain ATCC BAA-125 / DSM 18197 / FERM 7344 / JCM 9153 / C-125) (Bacillus halodurans).